The following is a 2380-amino-acid chain: DNA polymerase epsilon catalytic subunit A (2380 aa).

The span at 169–196 (YYNKGNNNNNNHQNYNNNNNQNNNNFNK) shows a compositional bias: low complexity. Disordered regions lie at residues 169–209 (YYNK…NNSK), 1178–1210 (FFEKTEDNDQDNDNDNDNDNDNDNDNSKPQQTD), 1766–1787 (KNTSNNSNTKNGANQNTTNDTT), 1967–1998 (QQQQQQQDNADDDDDDDVSENEEEQQQNKNKK), and 2059–2120 (KIST…TTTS). The segment covering 1183-1201 (EDNDQDNDNDNDNDNDNDN) has biased composition (acidic residues). Over residues 1767–1776 (NTSNNSNTKN) the composition is skewed to low complexity. Residues 1777–1787 (GANQNTTNDTT) are compositionally biased toward polar residues. Acidic residues predominate over residues 1975–1991 (NADDDDDDDVSENEEEQ). 2 stretches are compositionally biased toward low complexity: residues 2059 to 2081 (KISTTSSSSNNDSTAATTTTTKD) and 2110 to 2120 (SSSSSTTTTTS). Residues C2225 and C2228 each coordinate Zn(2+). The CysA-type zinc finger occupies 2225–2288 (CSSCHSCRDI…RVPELSCIQC (64 aa)). Residues 2245-2258 (ISSRLSSQQKSNNN) show a composition bias toward low complexity. Residues 2245–2275 (ISSRLSSQQKSNNNDSDDSDDDNEENEGDDD) are disordered. Residues 2259–2275 (DSDDSDDDNEENEGDDD) are compositionally biased toward acidic residues. Residues C2285 and C2288 each coordinate Zn(2+). Positions 2319, 2322, 2334, and 2337 each coordinate [4Fe-4S] cluster. The short motif at 2319-2337 (CSKCNDVKSDNLGDICPQC) is the CysB motif element.

It belongs to the DNA polymerase type-B family. As to quaternary structure, consists of three subunits: pole, pole2 and pole3. The cofactor is [4Fe-4S] cluster.

It localises to the nucleus. The catalysed reaction is DNA(n) + a 2'-deoxyribonucleoside 5'-triphosphate = DNA(n+1) + diphosphate. Functionally, DNA polymerase II participates in chromosomal DNA replication. In Dictyostelium discoideum (Social amoeba), this protein is DNA polymerase epsilon catalytic subunit A (pole).